The sequence spans 475 residues: Dihydrolipoyl dehydrogenase (475 aa).

FAD-binding positions include 39–47 (EKDAYGGTC), Lys56, and Ala118. Cys47 and Cys52 form a disulfide bridge. NAD(+)-binding positions include 186–190 (GGGYI), Glu209, and 275–278 (AVGR). 2 residues coordinate FAD: Asp318 and Ala327. The Proton acceptor role is filled by His451.

It belongs to the class-I pyridine nucleotide-disulfide oxidoreductase family. Homodimer. It depends on FAD as a cofactor.

It is found in the cytoplasm. The enzyme catalyses N(6)-[(R)-dihydrolipoyl]-L-lysyl-[protein] + NAD(+) = N(6)-[(R)-lipoyl]-L-lysyl-[protein] + NADH + H(+). In Haloferax volcanii (strain ATCC 29605 / DSM 3757 / JCM 8879 / NBRC 14742 / NCIMB 2012 / VKM B-1768 / DS2) (Halobacterium volcanii), this protein is Dihydrolipoyl dehydrogenase (lpdA).